The chain runs to 378 residues: GTP cyclohydrolase-2 (378 aa).

Residues M1 to K180 are DHBP synthase-like. The segment at S181–D378 is GTP cyclohydrolase II. Residue R229–E233 coordinates GTP. Zn(2+) is bound by residues C234, C245, and C247. GTP contacts are provided by residues Q250, E273–R275, and T295. The active-site Proton acceptor is D307. R309 functions as the Nucleophile in the catalytic mechanism. Residues T330 and K335 each coordinate GTP.

The protein in the N-terminal section; belongs to the DHBP synthase family. This sequence in the C-terminal section; belongs to the GTP cyclohydrolase II family. Zn(2+) is required as a cofactor.

The enzyme catalyses GTP + 4 H2O = 2,5-diamino-6-hydroxy-4-(5-phosphoribosylamino)-pyrimidine + formate + 2 phosphate + 3 H(+). The protein operates within cofactor biosynthesis; riboflavin biosynthesis; 5-amino-6-(D-ribitylamino)uracil from GTP: step 1/4. Catalyzes the conversion of GTP to 2,5-diamino-6-ribosylamino-4(3H)-pyrimidinone 5'-phosphate (DARP), formate and pyrophosphate. The chain is GTP cyclohydrolase-2 (ribA) from Archaeoglobus fulgidus (strain ATCC 49558 / DSM 4304 / JCM 9628 / NBRC 100126 / VC-16).